The sequence spans 447 residues: Probable arabinosyltransferase ARAD1 (447 aa).

At 1 to 6 the chain is on the cytoplasmic side; sequence MARKSS. The helical; Signal-anchor for type II membrane protein transmembrane segment at 7–29 threads the bilayer; sequence LLKRAAIAVVSVIAIYVILNASV. The Lumenal portion of the chain corresponds to 30-447; it reads SRSLPSSSDL…TNQTGLITSI (418 aa). Positions 32–41 are enriched in low complexity; the sequence is SLPSSSDLPR. Residues 32–52 form a disordered region; that stretch reads SLPSSSDLPRQLIREDDDDEG. N-linked (GlcNAc...) asparagine glycans are attached at residues asparagine 427, asparagine 432, and asparagine 439.

The protein belongs to the glycosyltransferase 47 family. Homodimer and heterodimer with ARAD2. As to expression, expressed in root vasculature, cotyledons, leaves, stems, vascular tissue of sepals, petals and stamens, pollen grains, mature siliques and abscission region of seeds.

The protein resides in the golgi apparatus membrane. Functionally, probable arabinosyl transferase responsible for the polymerization of arabinose into the arabinan of arabinogalactan. May function as inverting enzyme using UDP-beta-L-arabinopyranoside. May be important for arabinan side chains of rhamnogalacturonan I (RG-I), a major component of pectins. Cell wall pectic arabinans are involved in thigmomorphogenesis response of inflorescence stems to mechanical stress. The polypeptide is Probable arabinosyltransferase ARAD1 (ARAD1) (Arabidopsis thaliana (Mouse-ear cress)).